The primary structure comprises 391 residues: Xylose isomerase (391 aa).

Active-site residues include H54 and D57. Residues E181, E217, H220, D245, D255, D257, and D287 each coordinate Mg(2+).

The protein belongs to the xylose isomerase family. As to quaternary structure, homotetramer. The cofactor is Mg(2+).

The protein resides in the cytoplasm. The enzyme catalyses alpha-D-xylose = alpha-D-xylulofuranose. Involved in D-xylose catabolism. This is Xylose isomerase (xylA) from Streptomyces albus G.